Here is a 396-residue protein sequence, read N- to C-terminus: Pinosylvin synthase 2 (396 aa).

60 to 63 (KFKR) contacts substrate. Residue cysteine 170 is part of the active site. Residues leucine 273 and 311-313 (GGR) each bind substrate.

This sequence belongs to the thiolase-like superfamily. Chalcone/stilbene synthases family. As to quaternary structure, homodimer.

The protein resides in the cytoplasm. The enzyme catalyses (E)-cinnamoyl-CoA + 3 malonyl-CoA + 3 H(+) = (E)-pinosylvin + 4 CO2 + 4 CoA. The catalysed reaction is 3-phenylpropanoyl-CoA + 3 malonyl-CoA + 3 H(+) = dihydropinosylvin + 4 CO2 + 4 CoA. It participates in phytoalexin biosynthesis; pinosylvin biosynthesis. Catalyzes the production of pinosylvin from cinnamoyl-CoA and malonyl-CoA, and dihydropinosylvin from dihydrocinnamoyl-CoA. This chain is Pinosylvin synthase 2, found in Pinus strobus (Eastern white pine).